Here is a 264-residue protein sequence, read N- to C-terminus: 3-methyl-2-oxobutanoate hydroxymethyltransferase (264 aa).

Positions 45 and 84 each coordinate Mg(2+). Residues 45–46 (DS), Asp84, and Lys112 contribute to the 3-methyl-2-oxobutanoate site. A Mg(2+)-binding site is contributed by Glu114. The Proton acceptor role is filled by Glu181.

This sequence belongs to the PanB family. Homodecamer; pentamer of dimers. Requires Mg(2+) as cofactor.

The protein localises to the cytoplasm. It catalyses the reaction 3-methyl-2-oxobutanoate + (6R)-5,10-methylene-5,6,7,8-tetrahydrofolate + H2O = 2-dehydropantoate + (6S)-5,6,7,8-tetrahydrofolate. It participates in cofactor biosynthesis; (R)-pantothenate biosynthesis; (R)-pantoate from 3-methyl-2-oxobutanoate: step 1/2. Its function is as follows. Catalyzes the reversible reaction in which hydroxymethyl group from 5,10-methylenetetrahydrofolate is transferred onto alpha-ketoisovalerate to form ketopantoate. The sequence is that of 3-methyl-2-oxobutanoate hydroxymethyltransferase from Shewanella putrefaciens (strain CN-32 / ATCC BAA-453).